The primary structure comprises 265 residues: Insulin-like growth factor-binding protein 5 (265 aa).

A signal peptide spans 1-21 (MEMLLPMCLLLVSLCLGQCQA). Positions 24–104 (SFVHCEPCDD…LHGRGVCLNL (81 aa)) constitute an IGFBP N-terminal domain. Cystine bridges form between Cys-28/Cys-54, Cys-31/Cys-56, Cys-39/Cys-57, Cys-46/Cys-60, Cys-68/Cys-81, and Cys-75/Cys-101. Basic and acidic residues predominate over residues 111 to 121 (SKIDRESREED). Residues 111–137 (SKIDRESREEDPTTSETEDIYQSKHRG) form a disordered region. In terms of domain architecture, Thyroglobulin type-1 spans 182 to 256 (MGPCRRQVET…IDYVNGDLQC (75 aa)). 3 disulfide bridges follow: Cys-185-Cys-212, Cys-223-Cys-234, and Cys-236-Cys-256.

It localises to the secreted. Its function is as follows. IGF-binding proteins prolong the half-life of the IGFs and have been shown to either inhibit or stimulate the growth promoting effects of the IGFs on cell culture. They alter the interaction of IGFs with their cell surface receptors. Promotes anterior neural development by stimulating insulin growth factor (IGF) signaling via IGF receptors. The protein is Insulin-like growth factor-binding protein 5 of Xenopus laevis (African clawed frog).